Here is a 390-residue protein sequence, read N- to C-terminus: 5-hydroxytryptamine receptor 1B (390 aa).

The Extracellular segment spans residues 1–46 (MEEPGAQCAPPPPAGSETWVPQANLSSAPSQNCSAKDYIYQDSISL). N-linked (GlcNAc...) asparagine glycosylation is found at N24 and N32. Residues 47–72 (PWKVLLVMLLALITLATTLSNAFVIA) traverse the membrane as a helical segment. Residues 73-86 (TVYRTRKLHTPANY) are Cytoplasmic-facing. Residues 87 to 111 (LIASLAVTDLLVSILVMPISTMYTV) form a helical membrane-spanning segment. The Extracellular segment spans residues 112–119 (TGRWTLGQ). The chain crosses the membrane as a helical span at residues 120 to 145 (VVCDFWLSSDITCCTASILHLCVIAL). Residues C122 and C199 are joined by a disulfide bond. Residues D129 and T134 each contribute to the ergotamine site. The short motif at 146–148 (DRY) is the DRY motif; important for ligand-induced conformation changes and signaling element. Over 146 to 165 (DRYWAITDAVEYSAKRTPKR) the chain is Cytoplasmic. Residues 166 to 184 (AAVMIALVWVFSISISLPP) traverse the membrane as a helical segment. At 185 to 205 (FFWRQAKAEEEVSECVVNTDH) the chain is on the extracellular side. V201 is a binding site for ergotamine. A helical transmembrane segment spans residues 206–229 (ILYTVYSTVGAFYFPTLLLIALYG). The Cytoplasmic segment spans residues 230–315 (RIYVEARSRI…AARERKATKT (86 aa)). The span at 259 to 272 (DSPGSTSSVTSINS) shows a compositional bias: polar residues. The tract at residues 259–281 (DSPGSTSSVTSINSRVPDVPSES) is disordered. A helical membrane pass occupies residues 316–337 (LGIILGAFIVCWLPFFIISLVM). Over 338 to 347 (PICKDACWFH) the chain is Extracellular. A helical transmembrane segment spans residues 348-370 (LAIFDFFTWLGYLNSLINPIIYT). The NPxxY motif; important for ligand-induced conformation changes and signaling motif lies at 365–369 (NPIIY). Residues 371–390 (MSNEDFKQAFHKLIRFKCTS) are Cytoplasmic-facing. A lipid anchor (S-palmitoyl cysteine) is attached at C388.

This sequence belongs to the G-protein coupled receptor 1 family. Homodimer. Heterodimer with HTR1D. Post-translationally, phosphorylated. Desensitization of the receptor may be mediated by its phosphorylation. Palmitoylated. As to expression, detected in cerebral artery smooth muscle cells (at protein level). Detected in brain cortex, striatum, amygdala, medulla, hippocampus, caudate nucleus and putamen.

It localises to the cell membrane. Its function is as follows. G-protein coupled receptor for 5-hydroxytryptamine (serotonin). Also functions as a receptor for ergot alkaloid derivatives, various anxiolytic and antidepressant drugs and other psychoactive substances, such as lysergic acid diethylamide (LSD). Ligand binding causes a conformation change that triggers signaling via guanine nucleotide-binding proteins (G proteins) and modulates the activity of downstream effectors, such as adenylate cyclase. HTR1B is coupled to G(i)/G(o) G alpha proteins and mediates inhibitory neurotransmission by inhibiting adenylate cyclase activity. Arrestin family members inhibit signaling via G proteins and mediate activation of alternative signaling pathways. Regulates the release of 5-hydroxytryptamine, dopamine and acetylcholine in the brain, and thereby affects neural activity, nociceptive processing, pain perception, mood and behavior. Besides, plays a role in vasoconstriction of cerebral arteries. The polypeptide is 5-hydroxytryptamine receptor 1B (Homo sapiens (Human)).